A 384-amino-acid polypeptide reads, in one-letter code: GDSL esterase/lipase At1g71691 (384 aa).

Positions 1–27 (MAFHFRRLCFFSALLAVVLQLLHGVSG) are cleaved as a signal peptide. S62 (nucleophile) is an active-site residue. Catalysis depends on residues D348 and H351.

It belongs to the 'GDSL' lipolytic enzyme family.

The protein resides in the secreted. This chain is GDSL esterase/lipase At1g71691, found in Arabidopsis thaliana (Mouse-ear cress).